The primary structure comprises 238 residues: Glutamine amidotransferase-like protein chyE (238 aa).

The region spanning 8 to 238 (KIAVLINTPP…LERVLQWLSE (231 aa)) is the Glutamine amidotransferase type-1 domain. Cys-102 (nucleophile) is an active-site residue. Active-site residues include His-189 and Glu-191.

This sequence belongs to the peptidase C26 family.

It functions in the pathway pigment biosynthesis. Glutamine amidotransferase-like protein; part of the gene cluster that mediates the biosynthesis of the yellow pigment chrysogine. the NRPS chyA mediates the condensation of anthranilic acid and alanine into the intermediate 2-(2-aminopropanamido)benzoic acid. The remainder of the pathway is highly branched yielding at least 13 chrysogine-related compounds. The malonyl transferase chyE converts 2-(2-aminopropanamido)benzoic acid and 2-(2-aminopropanamido)benzamidine into 2-(2-(2-carboxyacetamido)propanamido)benzoic acid and 3-((1-((2-carbamoylphenyl)amino)-1-oxopropan-2-yl)amino)-3-oxopropanoic acid, respectively. ChyD is an amidase, being responsible for the amidation of the carboxylic acid moiety of 2-(2-aminopropanamido)benzoic acid, 2-(2-(2-carboxyacetamido)propanamido)benzoic acid and 2-(2-((4-amino-1-carboxy-4-oxobutyl)amino)propanamido)benzoic acid. ChyC is involved in the same reactions as ChyD, but plays a more minor role in the amidation reactions compared to chyD. The oxidoreductases chyH and chyM are involved in oxidation reactions that form N-pyruvoylanthranilamide from 2-(2-aminopropanamido)benzamidine and (1-((2-carbamoylphenyl)amino)-1-oxopropan-2-yl)glutamine, respectively. N-pyruvoylanthranilamide is further converted via two further branches in the pathway, yielding chrysogine and additional chrysogine-related coumpounds. Chrysogine is likely formed by a spontaneous ring closure from N-pyruvoylanthranilamide. The sequence is that of Glutamine amidotransferase-like protein chyE from Penicillium rubens (strain ATCC 28089 / DSM 1075 / NRRL 1951 / Wisconsin 54-1255) (Penicillium chrysogenum).